Consider the following 650-residue polypeptide: Threonine--tRNA ligase (650 aa).

The TGS domain occupies 5-67 (NKSMFIKLKD…QEGDQVILWG (63 aa)). The catalytic stretch occupies residues 246 to 537 (DHKLLGAKLD…LIEHYVGKFP (292 aa)). Residues cysteine 337, histidine 388, and histidine 514 each contribute to the Zn(2+) site.

Belongs to the class-II aminoacyl-tRNA synthetase family. Homodimer. Zn(2+) is required as a cofactor.

The protein localises to the cytoplasm. The catalysed reaction is tRNA(Thr) + L-threonine + ATP = L-threonyl-tRNA(Thr) + AMP + diphosphate + H(+). Its function is as follows. Catalyzes the attachment of threonine to tRNA(Thr) in a two-step reaction: L-threonine is first activated by ATP to form Thr-AMP and then transferred to the acceptor end of tRNA(Thr). Also edits incorrectly charged L-seryl-tRNA(Thr). This Protochlamydia amoebophila (strain UWE25) protein is Threonine--tRNA ligase.